Reading from the N-terminus, the 312-residue chain is 26S proteasome non-ATPase regulatory subunit 14 (312 aa).

Positions 33–168 (VYISSLALLK…IDAFRTINPQ (136 aa)) constitute an MPN domain. Zn(2+) contacts are provided by histidine 115, histidine 117, and aspartate 128. The JAMM motif signature appears at 115–128 (HSHPGFGCWLSGVD).

The protein belongs to the peptidase M67A family. PSMD14 subfamily. In terms of assembly, component of the 19S regulatory cap of the 26S proteasome.

In terms of biological role, metalloprotease component of the 26S proteasome that specifically cleaves 'Lys-63'-linked polyubiquitin chains. The 26S proteasome is involved in the ATP-dependent degradation of ubiquitinated proteins. The function of the 'Lys-63'-specific deubiquitination of the proteasome is unclear. The sequence is that of 26S proteasome non-ATPase regulatory subunit 14 (rpn-11) from Caenorhabditis elegans.